A 186-amino-acid chain; its full sequence is Peptide deformylase (186 aa).

Residues Cys94 and His136 each contribute to the Fe cation site. Glu137 is an active-site residue. His140 lines the Fe cation pocket.

Belongs to the polypeptide deformylase family. Fe(2+) serves as cofactor.

The enzyme catalyses N-terminal N-formyl-L-methionyl-[peptide] + H2O = N-terminal L-methionyl-[peptide] + formate. Removes the formyl group from the N-terminal Met of newly synthesized proteins. Requires at least a dipeptide for an efficient rate of reaction. N-terminal L-methionine is a prerequisite for activity but the enzyme has broad specificity at other positions. This chain is Peptide deformylase, found in Prosthecochloris aestuarii (strain DSM 271 / SK 413).